The sequence spans 475 residues: Chromosomal replication initiator protein DnaA (475 aa).

Residues 1–73 form a domain I, interacts with DnaA modulators region; the sequence is MSDIEQERWS…LACWQAELPD (73 aa). The tract at residues 73–131 is domain II; sequence DVHRIDLMVRSAMRCAAPAKEAPAADPRRPEHGDGRASTELKMVATAPASANHDALGGS. The tract at residues 132-354 is domain III, AAA+ region; sequence PLDPRLTFAS…GAINRLLAHS (223 aa). ATP contacts are provided by G179, G181, K182, and T183. Residues 355–475 form a domain IV, binds dsDNA region; that stretch reads KLNAQPVTLE…VELLKRQLQE (121 aa).

Belongs to the DnaA family. In terms of assembly, oligomerizes as a right-handed, spiral filament on DNA at oriC.

It is found in the cytoplasm. Functionally, plays an essential role in the initiation and regulation of chromosomal replication. ATP-DnaA binds to the origin of replication (oriC) to initiate formation of the DNA replication initiation complex once per cell cycle. Binds the DnaA box (a 9 base pair repeat at the origin) and separates the double-stranded (ds)DNA. Forms a right-handed helical filament on oriC DNA; dsDNA binds to the exterior of the filament while single-stranded (ss)DNA is stabiized in the filament's interior. The ATP-DnaA-oriC complex binds and stabilizes one strand of the AT-rich DNA unwinding element (DUE), permitting loading of DNA polymerase. After initiation quickly degrades to an ADP-DnaA complex that is not apt for DNA replication. Binds acidic phospholipids. The polypeptide is Chromosomal replication initiator protein DnaA (Nitrobacter hamburgensis (strain DSM 10229 / NCIMB 13809 / X14)).